The sequence spans 557 residues: Membrane protein insertase YidC (557 aa).

A helical membrane pass occupies residues 1-21; it reads MNWLRNSLIAAILVITYVLFI. The tract at residues 52-71 is disordered; that stretch reads SDDAVASSATEESDVPEVSV. The next 5 membrane-spanning stretches (helical) occupy residues 346–366, 369–389, 439–459, 470–490, and 517–537; these read TIDY…LDFI, LVGN…AVFF, FGGC…YWMI, FFLW…PLLM, and PIGF…YWVV.

The protein belongs to the OXA1/ALB3/YidC family. Type 1 subfamily. As to quaternary structure, interacts with the Sec translocase complex via SecD. Specifically interacts with transmembrane segments of nascent integral membrane proteins during membrane integration.

It is found in the cell inner membrane. In terms of biological role, required for the insertion and/or proper folding and/or complex formation of integral membrane proteins into the membrane. Involved in integration of membrane proteins that insert both dependently and independently of the Sec translocase complex, as well as at least some lipoproteins. Aids folding of multispanning membrane proteins. This is Membrane protein insertase YidC from Saccharophagus degradans (strain 2-40 / ATCC 43961 / DSM 17024).